A 257-amino-acid polypeptide reads, in one-letter code: E3 ubiquitin-protein ligase RNF170 (257 aa).

The Lumenal segment spans residues 1-24; the sequence is MADNQEERPHFPLDEGSIIEGVSD. Residues 25–45 form a helical membrane-spanning segment; the sequence is QVIVVVLLSFVAVGSLIYLLL. Residues 46–200 are Cytoplasmic-facing; that stretch reads RNDEQNIHPE…GGLFWMFRIR (155 aa). The RING-type zinc-finger motif lies at 87–130; sequence CPVCLQQATFPVETNCGHLFCGSCIIAYWRYGTWLGAINCPICR. A helical membrane pass occupies residues 201–221; that stretch reads IVLCLLGALLYLVSPLDIIPE. Ala222 is a topological domain (lumenal). The helical transmembrane segment at 223–243 threads the bilayer; that stretch reads LFGILGFLDDLFVLFLLLIYI. Over 244 to 257 the chain is Cytoplasmic; the sequence is SIMYREVVTQRLYR.

It localises to the endoplasmic reticulum membrane. It catalyses the reaction S-ubiquitinyl-[E2 ubiquitin-conjugating enzyme]-L-cysteine + [acceptor protein]-L-lysine = [E2 ubiquitin-conjugating enzyme]-L-cysteine + N(6)-ubiquitinyl-[acceptor protein]-L-lysine.. It participates in protein modification; protein ubiquitination. In terms of biological role, E3 ubiquitin-protein ligase that plays an essential role in stimulus-induced inositol 1,4,5-trisphosphate receptor (ITPR) ubiquitination and degradation via the endoplasmic reticulum-associated degradation (ERAD) pathway. Also involved in ITPR turnover in resting cells. The polypeptide is E3 ubiquitin-protein ligase RNF170 (rnf170) (Xenopus laevis (African clawed frog)).